A 350-amino-acid polypeptide reads, in one-letter code: tRNA uridine(34) hydroxylase (350 aa).

The Rhodanese domain occupies 146–240 (DDPDALFIDM…YARKAREQGL (95 aa)). Residue Cys-200 is the Cysteine persulfide intermediate of the active site.

Belongs to the TrhO family.

The enzyme catalyses uridine(34) in tRNA + AH2 + O2 = 5-hydroxyuridine(34) in tRNA + A + H2O. Functionally, catalyzes oxygen-dependent 5-hydroxyuridine (ho5U) modification at position 34 in tRNAs, the first step in 5-carboxymethoxyuridine (cmo5U) biosynthesis. May be part of an alternate pathway, which is able to bypass cmo5U biogenesis in a subset of tRNAs under aerobic conditions. The protein is tRNA uridine(34) hydroxylase of Escherichia coli O157:H7.